A 356-amino-acid polypeptide reads, in one-letter code: UDP-N-acetylglucosamine--N-acetylmuramyl-(pentapeptide) pyrophosphoryl-undecaprenol N-acetylglucosamine transferase (356 aa).

Residues 12-14, N120, R163, S187, and Q286 each bind UDP-N-acetyl-alpha-D-glucosamine; that span reads SGG.

It belongs to the glycosyltransferase 28 family. MurG subfamily.

It is found in the cell inner membrane. The catalysed reaction is di-trans,octa-cis-undecaprenyl diphospho-N-acetyl-alpha-D-muramoyl-L-alanyl-D-glutamyl-meso-2,6-diaminopimeloyl-D-alanyl-D-alanine + UDP-N-acetyl-alpha-D-glucosamine = di-trans,octa-cis-undecaprenyl diphospho-[N-acetyl-alpha-D-glucosaminyl-(1-&gt;4)]-N-acetyl-alpha-D-muramoyl-L-alanyl-D-glutamyl-meso-2,6-diaminopimeloyl-D-alanyl-D-alanine + UDP + H(+). It functions in the pathway cell wall biogenesis; peptidoglycan biosynthesis. Functionally, cell wall formation. Catalyzes the transfer of a GlcNAc subunit on undecaprenyl-pyrophosphoryl-MurNAc-pentapeptide (lipid intermediate I) to form undecaprenyl-pyrophosphoryl-MurNAc-(pentapeptide)GlcNAc (lipid intermediate II). In Pelagibacter ubique (strain HTCC1062), this protein is UDP-N-acetylglucosamine--N-acetylmuramyl-(pentapeptide) pyrophosphoryl-undecaprenol N-acetylglucosamine transferase.